The primary structure comprises 55 residues: uncharacterized protein (55 aa).

This is an uncharacterized protein from Clostridium perfringens.